A 152-amino-acid chain; its full sequence is Nucleoside diphosphate kinase (152 aa).

ATP is bound by residues Lys-11, Phe-59, Arg-87, Thr-93, Arg-104, and Asn-114. The active-site Pros-phosphohistidine intermediate is His-117.

Belongs to the NDK family. Homotetramer. Mg(2+) serves as cofactor.

It is found in the cytoplasm. It carries out the reaction a 2'-deoxyribonucleoside 5'-diphosphate + ATP = a 2'-deoxyribonucleoside 5'-triphosphate + ADP. The enzyme catalyses a ribonucleoside 5'-diphosphate + ATP = a ribonucleoside 5'-triphosphate + ADP. In terms of biological role, major role in the synthesis of nucleoside triphosphates other than ATP. The ATP gamma phosphate is transferred to the NDP beta phosphate via a ping-pong mechanism, using a phosphorylated active-site intermediate. This Prochlorococcus marinus (strain MIT 9215) protein is Nucleoside diphosphate kinase.